The following is a 358-amino-acid chain: Alanine racemase (358 aa).

The Proton acceptor; specific for D-alanine role is filled by lysine 35. Residue lysine 35 is modified to N6-(pyridoxal phosphate)lysine. Arginine 130 contributes to the substrate binding site. Tyrosine 255 acts as the Proton acceptor; specific for L-alanine in catalysis. Methionine 303 provides a ligand contact to substrate.

It belongs to the alanine racemase family. Pyridoxal 5'-phosphate serves as cofactor.

It carries out the reaction L-alanine = D-alanine. Its pathway is amino-acid biosynthesis; D-alanine biosynthesis; D-alanine from L-alanine: step 1/1. Functionally, catalyzes the interconversion of L-alanine and D-alanine. May also act on other amino acids. The sequence is that of Alanine racemase (alr) from Shewanella sediminis (strain HAW-EB3).